Consider the following 209-residue polypeptide: uncharacterized protein (209 aa).

A compositionally biased stretch (basic and acidic residues) spans 1–11; that stretch reads MMRTNAGKETK. The segment at 1 to 20 is disordered; the sequence is MMRTNAGKETKGYNPAPADS.

This is an uncharacterized protein from Caenorhabditis elegans.